The sequence spans 225 residues: MKLIVSVMPRSLEEAQALSATRYLDADIIEWRADYLPKEAILQVAPAIFEKFAGRELVFTLRTRSEGGEIDLSPEEYIHLIKEVAQFYQPDYIDFEYYSYKDVFEEMLDFPNLVLSYHNFQETPENMMEILSELTILNPKLVKVAVMAHTEQDVLDLMNYTRGFKTLNPEQEYVTISMGKVGKVSRITADVTGSSWSFASLDEVSAPGQISLASMKKIREILDEA.

Residues serine 6, 30–32, and arginine 62 contribute to the 3-dehydroquinate site; that span reads EWR. The active-site Proton donor/acceptor is histidine 118. Lysine 143 serves as the catalytic Schiff-base intermediate with substrate. Arginine 186, serine 205, and glutamine 209 together coordinate 3-dehydroquinate.

The protein belongs to the type-I 3-dehydroquinase family. As to quaternary structure, homodimer.

The enzyme catalyses 3-dehydroquinate = 3-dehydroshikimate + H2O. Its pathway is metabolic intermediate biosynthesis; chorismate biosynthesis; chorismate from D-erythrose 4-phosphate and phosphoenolpyruvate: step 3/7. In terms of biological role, involved in the third step of the chorismate pathway, which leads to the biosynthesis of aromatic amino acids. Catalyzes the cis-dehydration of 3-dehydroquinate (DHQ) and introduces the first double bond of the aromatic ring to yield 3-dehydroshikimate. The sequence is that of 3-dehydroquinate dehydratase from Streptococcus pneumoniae (strain ATCC 700669 / Spain 23F-1).